We begin with the raw amino-acid sequence, 134 residues long: RuBisCO chaperone RbcX (134 aa).

The tract at residues 97–134 (SNGNHRRSLLERLTQVDSSSTDQTEPNPGESDTSEDSE) is disordered. The segment covering 111 to 122 (QVDSSSTDQTEP) has biased composition (polar residues).

This sequence belongs to the RbcX family. Homodimer (RbcX2). Interacts with the exposed C-terminal peptide of RbcL ('Glu-459-Asp-468'); binds 2 RbcL peptides per RbcX2, stapling them into an RbcL2 dimer. A slightly longer peptide binds with a higher affinity, but no long-term stable interaction with RbcL is detected. Contacts a second RbcL monomer via its peripheral polar surface.

The protein resides in the carboxysome. The protein localises to the cytoplasm. Its function is as follows. An RbcL-specific chaperone. Required for assembly of the RbcL8 core, acting downstream of the major chaperonin (GroEL-GroES). Acts on newly folded RbcL, has a transient dynamic interaction with RbcL and is eventually displaced by RbcS. The central cleft of the RbcX homodimer (RbcX2) binds the C-terminus of an RbcL monomer, stabilizing the C-terminus and probably preventing its reassociation with chaperonin GroEL-ES. At the same time the peripheral region of RbcX2 binds a second RbcL monomer, bridging the RbcL homodimers in the correct orientation. The RbcX2(2)-bound RbcL dimers then assemble into the RbcL8 core (RbcL8-(RbcX2)8). RbcS binding triggers the release of RbcX2. Required for optimal reconstitution of RuBisCO into its RbcL8S8 holoenzyme form upon expression of rbcL-rbcS subunits in E.coli, and probably also in situ. A frameshift mutation that replaces half the protein reduces accumulation of both RbcL and RbcS subunits and halves activity of RuBisCO in situ and in E.coli. The polypeptide is RuBisCO chaperone RbcX (Picosynechococcus sp. (strain ATCC 27264 / PCC 7002 / PR-6) (Agmenellum quadruplicatum)).